The following is a 124-amino-acid chain: Fluoride-specific ion channel FluC (124 aa).

4 helical membrane-spanning segments follow: residues 6-26 (FAVA…ATWV), 34-54 (FYLA…YLYA), 69-89 (ALII…LDAL), and 101-121 (FAYV…GLAL). The Na(+) site is built by glycine 76 and threonine 79.

The protein belongs to the fluoride channel Fluc/FEX (TC 1.A.43) family.

It is found in the cell inner membrane. The catalysed reaction is fluoride(in) = fluoride(out). With respect to regulation, na(+) is not transported, but it plays an essential structural role and its presence is essential for fluoride channel function. Functionally, fluoride-specific ion channel. Important for reducing fluoride concentration in the cell, thus reducing its toxicity. This Stutzerimonas stutzeri (strain A1501) (Pseudomonas stutzeri) protein is Fluoride-specific ion channel FluC.